The following is a 504-amino-acid chain: L-carnitine/gamma-butyrobetaine antiporter (504 aa).

The next 12 membrane-spanning stretches (helical) occupy residues 10–30, 51–71, 92–112, 143–163, 195–215, 231–251, 263–283, 316–336, 347–367, 398–418, 446–466, and 475–495; these read IEPK…WLTV, WGWA…WLVF, IFMM…SIEI, GPLP…FFFV, FYLV…TPLV, LDAI…ACGL, SYLS…SFIM, WTVF…IFLA, LCFG…TVLG, WAAL…CFIA, LLVR…LLAL, and AIIA…LSFI.

The protein belongs to the BCCT transporter (TC 2.A.15) family. CaiT subfamily. Homotrimer.

It is found in the cell inner membrane. It carries out the reaction 4-(trimethylamino)butanoate(in) + (R)-carnitine(out) = 4-(trimethylamino)butanoate(out) + (R)-carnitine(in). It participates in amine and polyamine metabolism; carnitine metabolism. Catalyzes the exchange of L-carnitine for gamma-butyrobetaine. This is L-carnitine/gamma-butyrobetaine antiporter from Escherichia coli (strain ATCC 8739 / DSM 1576 / NBRC 3972 / NCIMB 8545 / WDCM 00012 / Crooks).